We begin with the raw amino-acid sequence, 428 residues long: Trigger factor (428 aa).

The region spanning 163-248 (GDTAIIDFEG…INDVKVKELS (86 aa)) is the PPIase FKBP-type domain.

The protein belongs to the FKBP-type PPIase family. Tig subfamily.

Its subcellular location is the cytoplasm. The enzyme catalyses [protein]-peptidylproline (omega=180) = [protein]-peptidylproline (omega=0). Its function is as follows. Involved in protein export. Acts as a chaperone by maintaining the newly synthesized protein in an open conformation. Functions as a peptidyl-prolyl cis-trans isomerase. The protein is Trigger factor of Clostridioides difficile (strain 630) (Peptoclostridium difficile).